The primary structure comprises 485 residues: Probable protein phosphatase 2C 3 (485 aa).

Residues 1 to 11 show a composition bias toward low complexity; that stretch reads MSSPSPSSEAA. 2 disordered regions span residues 1–29 and 43–72; these read MSSP…AAGG and ARAE…AEGG. Basic residues predominate over residues 13–23; sequence AHHHHHQRRQH. A PPM-type phosphatase domain is found at 107 to 353; sequence SSSSSSSLAS…DDTTCIVVDM (247 aa). Positions 129, 130, 305, and 344 each coordinate Mn(2+).

This sequence belongs to the PP2C family. The cofactor is Mg(2+). Requires Mn(2+) as cofactor.

The enzyme catalyses O-phospho-L-seryl-[protein] + H2O = L-seryl-[protein] + phosphate. It catalyses the reaction O-phospho-L-threonyl-[protein] + H2O = L-threonyl-[protein] + phosphate. The sequence is that of Probable protein phosphatase 2C 3 from Oryza sativa subsp. japonica (Rice).